Here is a 326-residue protein sequence, read N- to C-terminus: MKAPVRVAVTGAAGQIGYSLLFRIASGEMLGKDQPVILHLLDLPQAQTALKGVMMELEDCAFPLLAGMVATDDPNVAFKDVKVALLVGARPRSKGMERKDLLEANGAIFTVQGKALNDHAARDVKVLVVGNPANTNAWIAMKSAPDLDPKNFTAMLRLDHNRALSQIAAKTGKPVASIEKLAVWGNHSPTMYADYRFATIDGQSVKAMINDDVWNRDVFLPTVGKRGAAIIEARGLSSAASAANAAIDHIRDWVLGTNGKWVTMGVPSDGSYGIPEGVMYGVPVVCENGEYKRVEGLEIDAFSRERMDLTLAELEEERAAIAHLFG.

11–17 (GAAGQIG) provides a ligand contact to NAD(+). 2 residues coordinate substrate: Arg92 and Arg98. Residues Asn105, Gln112, and 129 to 131 (VGN) contribute to the NAD(+) site. Asn131 and Arg162 together coordinate substrate. The active-site Proton acceptor is His187.

This sequence belongs to the LDH/MDH superfamily. MDH type 2 family.

The enzyme catalyses (S)-malate + NAD(+) = oxaloacetate + NADH + H(+). In terms of biological role, catalyzes the reversible oxidation of malate to oxaloacetate. This Chromobacterium violaceum (strain ATCC 12472 / DSM 30191 / JCM 1249 / CCUG 213 / NBRC 12614 / NCIMB 9131 / NCTC 9757 / MK) protein is Malate dehydrogenase.